Consider the following 457-residue polypeptide: Flavohemoprotein-1 (457 aa).

Residues 2–157 (ALSEDTIKAV…LADLLIKREE (156 aa)) form the Globin domain. Heme b is bound at residue H106. Active-site charge relay system residues include Y116 and E156. The tract at residues 168–456 (GGWRQTRTFR…FEMFGPFKAS (289 aa)) is reductase. The region spanning 171–278 (RQTRTFRVEE…APPYGDFFLR (108 aa)) is the FAD-binding FR-type domain. FAD is bound by residues Y210 and 227–230 (RQYS). 320 to 325 (GIGQTP) is a binding site for NADP(+). 449-452 (MFGP) is an FAD binding site.

This sequence belongs to the globin family. Two-domain flavohemoproteins subfamily. The protein in the C-terminal section; belongs to the flavoprotein pyridine nucleotide cytochrome reductase family. As to quaternary structure, monomer. The cofactor is heme b. It depends on FAD as a cofactor.

The catalysed reaction is 2 nitric oxide + NADPH + 2 O2 = 2 nitrate + NADP(+) + H(+). It catalyses the reaction 2 nitric oxide + NADH + 2 O2 = 2 nitrate + NAD(+) + H(+). Functionally, flavohemoprotein involved in nitric oxide (NO) detoxification in an aerobic process, termed nitric oxide dioxygenase (NOD) reaction that utilizes O(2) and NAD(P)H to convert NO to nitrate, which protects the protozoan parasite from various noxious nitrogen compounds. Therefore, plays a central role in the inducible response to nitrosative stress. May also be involved in O(2) detoxification. The chain is Flavohemoprotein-1 (hmpA-1) from Giardia intestinalis (strain P15) (Giardia lamblia).